We begin with the raw amino-acid sequence, 508 residues long: Hydroxymethylglutaryl-CoA synthase, mitochondrial (508 aa).

The N-terminal 37 residues, 1–37 (MQRLLTPVRQVLQVKRVMQEASLLPARLLPAAHPSFS), are a transit peptide targeting the mitochondrion. K52 bears the N6-succinyllysine mark. 2 residues coordinate (3S)-3-hydroxy-3-methylglutaryl-CoA: E80 and A81. E132 (proton donor/acceptor) is an active-site residue. (3S)-3-hydroxy-3-methylglutaryl-CoA contacts are provided by C166, N204, and T208. C166 serves as the catalytic Acyl-thioester intermediate. K243 carries the post-translational modification N6-acetyllysine. Position 256 is an N6-acetyllysine; alternate (K256). K256 bears the N6-succinyllysine; alternate mark. S258 and H301 together coordinate (3S)-3-hydroxy-3-methylglutaryl-CoA. H301 acts as the Proton donor/acceptor in catalysis. K306 bears the N6-acetyllysine mark. K310 is a (3S)-3-hydroxy-3-methylglutaryl-CoA binding site. At K310 the chain carries N6-acetyllysine; alternate. K310 carries the post-translational modification N6-succinyllysine; alternate. Position 333 is an N6-succinyllysine (K333). 4 positions are modified to N6-acetyllysine; alternate: K342, K350, K354, and K358. An N6-succinyllysine; alternate mark is found at K342, K350, K354, and K358. (3S)-3-hydroxy-3-methylglutaryl-CoA contacts are provided by N380 and S414. S433 is subject to Phosphoserine. K437 carries the N6-acetyllysine modification. S440 is modified (phosphoserine). At K447 the chain carries N6-acetyllysine; alternate. K447 bears the N6-succinyllysine; alternate mark. S456 is subject to Phosphoserine. Residue K473 is modified to N6-acetyllysine; alternate. K473 is modified (N6-succinyllysine; alternate). S477 is subject to Phosphoserine.

Belongs to the thiolase-like superfamily. HMG-CoA synthase family. As to quaternary structure, homodimer. Succinylated. Desuccinylated by SIRT5. Succinylation, at least at Lys-310, inhibits the enzymatic activity.

Its subcellular location is the mitochondrion. It catalyses the reaction acetoacetyl-CoA + acetyl-CoA + H2O = (3S)-3-hydroxy-3-methylglutaryl-CoA + CoA + H(+). It participates in metabolic intermediate biosynthesis; (R)-mevalonate biosynthesis; (R)-mevalonate from acetyl-CoA: step 2/3. In terms of biological role, catalyzes the first irreversible step in ketogenesis, condensing acetyl-CoA to acetoacetyl-CoA to form HMG-CoA, which is converted by HMG-CoA reductase (HMGCR) into mevalonate. The chain is Hydroxymethylglutaryl-CoA synthase, mitochondrial (HMGCS2) from Bos taurus (Bovine).